Consider the following 612-residue polypeptide: Elongation factor 4 (612 aa).

In terms of domain architecture, tr-type G spans 12–194; it reads SRIRNFSIIA…QIVEKVPAPS (183 aa). GTP is bound by residues 24 to 29 and 141 to 144; these read DHGKST and NKID.

It belongs to the TRAFAC class translation factor GTPase superfamily. Classic translation factor GTPase family. LepA subfamily.

Its subcellular location is the cell membrane. The enzyme catalyses GTP + H2O = GDP + phosphate + H(+). Its function is as follows. Required for accurate and efficient protein synthesis under certain stress conditions. May act as a fidelity factor of the translation reaction, by catalyzing a one-codon backward translocation of tRNAs on improperly translocated ribosomes. Back-translocation proceeds from a post-translocation (POST) complex to a pre-translocation (PRE) complex, thus giving elongation factor G a second chance to translocate the tRNAs correctly. Binds to ribosomes in a GTP-dependent manner. This chain is Elongation factor 4, found in Bacillus licheniformis (strain ATCC 14580 / DSM 13 / JCM 2505 / CCUG 7422 / NBRC 12200 / NCIMB 9375 / NCTC 10341 / NRRL NRS-1264 / Gibson 46).